We begin with the raw amino-acid sequence, 261 residues long: MPQNEYIEKHIKQHGRRLDHEERKRKRAAREGHRVAKDAQTLKGWRGKQFAKQRYSEKVAMKKKIKAHQESKVKGPSTPKENDGEALPTYLLDRKDTNTAKAISSSIKQKRMEKADKFSVPLPKVKGISEEEMFKVIKTGKSKTKSWKRMITKHTFVGEGFTRRPVKMERIIRPSALRQKKANVTHPELGVTVFLPILGVKKNPQSPMYTQLGVLTKGTIIEVNVSELGLVTAGGKVVWGKYAQITNEPDRDGCVNAVLLV.

A compositionally biased stretch (basic and acidic residues) spans 1 to 22; it reads MPQNEYIEKHIKQHGRRLDHEE. 2 disordered regions span residues 1 to 39 and 61 to 85; these read MPQN…AKDA and MKKK…NDGE. A Nuclear localization signal motif is present at residues 15–22; the sequence is GRRLDHEE.

It belongs to the eukaryotic ribosomal protein eS8 family. Ribosome biogenesis protein NSA2 subfamily. As to quaternary structure, component of the pre-66S ribosomal particle. Interacts with NOP7 and RRP1. Interacts with RSA4 (via WD repeats).

The protein resides in the nucleus. Its subcellular location is the nucleolus. In terms of biological role, involved in the biogenesis of the 60S ribosomal subunit. May play a part in the quality control of pre-60S particles. The chain is Ribosome biogenesis protein NSA2 (NSA2) from Meyerozyma guilliermondii (strain ATCC 6260 / CBS 566 / DSM 6381 / JCM 1539 / NBRC 10279 / NRRL Y-324) (Yeast).